The chain runs to 101 residues: Large ribosomal subunit protein bL21 (101 aa).

Belongs to the bacterial ribosomal protein bL21 family. In terms of assembly, part of the 50S ribosomal subunit. Contacts protein L20.

In terms of biological role, this protein binds to 23S rRNA in the presence of protein L20. This Corynebacterium diphtheriae (strain ATCC 700971 / NCTC 13129 / Biotype gravis) protein is Large ribosomal subunit protein bL21.